The primary structure comprises 318 residues: Polyprenal reductase (318 aa).

Over methionine 1–alanine 11 the chain is Cytoplasmic. The chain crosses the membrane as a helical span at residues leucine 12 to leucine 34. At leucine 35–tyrosine 80 the chain is on the lumenal side. Residues isoleucine 81–glycine 101 form a helical membrane-spanning segment. The Cytoplasmic segment spans residues alanine 102–alanine 117. Residues alanine 118–leucine 138 form a helical membrane-spanning segment. Over histidine 139–methionine 157 the chain is Lumenal. A helical membrane pass occupies residues isoleucine 158 to leucine 178. The Cytoplasmic segment spans residues serine 179–asparagine 194. The helical transmembrane segment at leucine 195 to alanine 215 threads the bilayer. Topologically, residues histidine 216–leucine 260 are lumenal. A helical membrane pass occupies residues methionine 261–valine 281. Residues threonine 282–phenylalanine 318 lie on the Cytoplasmic side of the membrane.

Belongs to the steroid 5-alpha reductase family. Polyprenal reductase subfamily. As to expression, expressed in preadipocytes (at protein level). Overexpressed in hormone-refractory prostate cancers (HRPC). Almost no or little expression in normal adult organs.

It localises to the endoplasmic reticulum membrane. The enzyme catalyses a di-trans,poly-cis-dolichal + NADP(+) = a di-trans,poly-cis-polyprenal + NADPH + H(+). It carries out the reaction a 3-oxo-5alpha-steroid + NADP(+) = a 3-oxo-Delta(4)-steroid + NADPH + H(+). The catalysed reaction is androst-4-ene-3,17-dione + NADPH + H(+) = 5alpha-androstan-3,17-dione + NADP(+). It catalyses the reaction 17beta-hydroxy-5alpha-androstan-3-one + NADP(+) = testosterone + NADPH + H(+). Its pathway is protein modification; protein glycosylation. In terms of biological role, plays a key role in early steps of protein N-linked glycosylation by being involved in the conversion of polyprenol into dolichol. Acts as a polyprenal reductase that mediates the reduction of polyprenal into dolichal in a NADP-dependent mechanism. Dolichols are required for the synthesis of dolichol-linked monosaccharides and the oligosaccharide precursor used for N-glycosylation. Also able to convert testosterone (T) into 5-alpha-dihydrotestosterone (DHT). The polypeptide is Polyprenal reductase (Homo sapiens (Human)).